The primary structure comprises 394 residues: Cobalt-precorrin-5B C(1)-methyltransferase (394 aa).

It belongs to the CbiD family.

It carries out the reaction Co-precorrin-5B + S-adenosyl-L-methionine = Co-precorrin-6A + S-adenosyl-L-homocysteine. It functions in the pathway cofactor biosynthesis; adenosylcobalamin biosynthesis; cob(II)yrinate a,c-diamide from sirohydrochlorin (anaerobic route): step 6/10. In terms of biological role, catalyzes the methylation of C-1 in cobalt-precorrin-5B to form cobalt-precorrin-6A. The chain is Cobalt-precorrin-5B C(1)-methyltransferase from Clostridium beijerinckii (strain ATCC 51743 / NCIMB 8052) (Clostridium acetobutylicum).